The chain runs to 258 residues: Translocon-associated protein subunit alpha (258 aa).

An N-terminal signal peptide occupies residues 1–24 (MMNLRVLFLALLLLASPLLQVARC). The Lumenal segment spans residues 25–190 (QSDAEDHSSL…ESGGLLSGES (166 aa)). Asparagine 57, asparagine 119, and asparagine 127 each carry an N-linked (GlcNAc...) asparagine glycan. Residues 191 to 209 (VFLLTLGIGLLLLLGLWAY) form a helical membrane-spanning segment. Over 210–258 (SQVQRLTKKTKKVSKVEVGTRSTEASLDEWLEGTTLAKTSSGKTKNKKN) the chain is Cytoplasmic.

The protein belongs to the TRAP-alpha family. Heterotetramer of TRAP-alpha, TRAP-beta, TRAP-delta and TRAP-gamma. Phosphorylated in its cytoplasmic tail.

The protein localises to the endoplasmic reticulum membrane. Its function is as follows. TRAP proteins are part of a complex whose function is to bind calcium to the ER membrane and thereby regulate the retention of ER resident proteins. May be involved in the recycling of the translocation apparatus after completion of the translocation process or may function as a membrane-bound chaperone facilitating folding of translocated proteins. The chain is Translocon-associated protein subunit alpha from Arabidopsis thaliana (Mouse-ear cress).